Reading from the N-terminus, the 352-residue chain is Protein NDRG4 (352 aa).

A phosphoserine mark is found at Ser-298, Ser-317, and Ser-323. Over residues 314–323 (RTASLTSASS) the composition is skewed to low complexity. The interval 314–352 (RTASLTSASSVDGSRPQACTHSESSEGLGQVNHTMEVSC) is disordered. A compositionally biased stretch (polar residues) spans 330-352 (QACTHSESSEGLGQVNHTMEVSC).

The protein belongs to the NDRG family. Post-translationally, phosphorylated in an aortic smooth muscle cell line, following PDGF treatment. As to expression, expressed predominantly in brain and heart (at protein level). In the brain, detected in astrocytes. Isoform 1 and isoform 2 are only expressed in brain. Isoform 3 is expressed in both heart and brain. Up-regulated in glioblastoma multiforme cells.

The protein resides in the cytoplasm. It is found in the cytosol. In terms of biological role, contributes to the maintenance of intracerebral BDNF levels within the normal range, which is necessary for the preservation of spatial learning and the resistance to neuronal cell death caused by ischemic stress. May enhance growth factor-induced ERK1 and ERK2 phosphorylation, including that induced by PDGF and FGF. May attenuate NGF-promoted ELK1 phosphorylation in a microtubule-dependent manner. This chain is Protein NDRG4 (NDRG4), found in Homo sapiens (Human).